A 310-amino-acid polypeptide reads, in one-letter code: Putative S-adenosyl-L-methionine-dependent methyltransferase MSMEG_1888/MSMEI_1848 (310 aa).

S-adenosyl-L-methionine is bound by residues Asp-128 and Asp-157–Leu-158.

This sequence belongs to the UPF0677 family.

In terms of biological role, exhibits S-adenosyl-L-methionine-dependent methyltransferase activity. The protein is Putative S-adenosyl-L-methionine-dependent methyltransferase MSMEG_1888/MSMEI_1848 of Mycolicibacterium smegmatis (strain ATCC 700084 / mc(2)155) (Mycobacterium smegmatis).